The following is a 52-amino-acid chain: ATP synthase protein 8 (52 aa).

Residues 6 to 26 form a helical membrane-spanning segment; that stretch reads PINGFVILCSISLMLLTLLIN.

The protein belongs to the ATPase protein 8 family. F-type ATPases have 2 components, CF(1) - the catalytic core - and CF(0) - the membrane proton channel.

Its subcellular location is the mitochondrion membrane. Mitochondrial membrane ATP synthase (F(1)F(0) ATP synthase or Complex V) produces ATP from ADP in the presence of a proton gradient across the membrane which is generated by electron transport complexes of the respiratory chain. F-type ATPases consist of two structural domains, F(1) - containing the extramembraneous catalytic core and F(0) - containing the membrane proton channel, linked together by a central stalk and a peripheral stalk. During catalysis, ATP synthesis in the catalytic domain of F(1) is coupled via a rotary mechanism of the central stalk subunits to proton translocation. Part of the complex F(0) domain. Minor subunit located with subunit a in the membrane. The protein is ATP synthase protein 8 (MT-ATP8) of Albinaria turrita (Door snail).